Consider the following 574-residue polypeptide: Lengsin (574 aa).

Disordered stretches follow at residues 1–36 (MNDEGDLLQENTRDEGNETEASRMSKLRRTRKKVTK) and 66–131 (GNMS…IPTT). Over residues 11-23 (NTRDEGNETEASR) the composition is skewed to basic and acidic residues. A compositionally biased stretch (basic residues) spans 25-36 (SKLRRTRKKVTK). A compositionally biased stretch (polar residues) spans 91-131 (NQTTVIKPSPLKTSASAPCSEFNTNSNHADNTWEDTQIPTT). The GS beta-grasp domain occupies 148 to 242 (NHLQFVRFEA…VICDTFTVTG (95 aa)). The region spanning 249–574 (PRYIAKRQLS…ERNKFLEYFI (326 aa)) is the GS catalytic domain.

This sequence belongs to the glutamine synthetase family. As to quaternary structure, dodecamer. Interacts with BFSP2 and VIM.

Its function is as follows. May act as a component of the cytoskeleton or as a chaperone for the reorganization of intermediate filament proteins during terminal differentiation in the lens. Does not seem to have enzymatic activity. This is Lengsin (LGSN) from Canis lupus familiaris (Dog).